A 591-amino-acid polypeptide reads, in one-letter code: 2-succinyl-5-enolpyruvyl-6-hydroxy-3-cyclohexene-1-carboxylate synthase (591 aa).

It belongs to the TPP enzyme family. MenD subfamily. As to quaternary structure, homodimer. The cofactor is Mg(2+). It depends on Mn(2+) as a cofactor. Thiamine diphosphate serves as cofactor.

The enzyme catalyses isochorismate + 2-oxoglutarate + H(+) = 5-enolpyruvoyl-6-hydroxy-2-succinyl-cyclohex-3-ene-1-carboxylate + CO2. The protein operates within quinol/quinone metabolism; 1,4-dihydroxy-2-naphthoate biosynthesis; 1,4-dihydroxy-2-naphthoate from chorismate: step 2/7. It participates in quinol/quinone metabolism; menaquinone biosynthesis. In terms of biological role, catalyzes the thiamine diphosphate-dependent decarboxylation of 2-oxoglutarate and the subsequent addition of the resulting succinic semialdehyde-thiamine pyrophosphate anion to isochorismate to yield 2-succinyl-5-enolpyruvyl-6-hydroxy-3-cyclohexene-1-carboxylate (SEPHCHC). This Salinibacter ruber (strain DSM 13855 / M31) protein is 2-succinyl-5-enolpyruvyl-6-hydroxy-3-cyclohexene-1-carboxylate synthase.